The sequence spans 218 residues: Major NAD(P)H-flavin oxidoreductase (218 aa).

FMN-binding positions include 12–16 and Asn-73; that span reads RYTSK. 154–159 is a binding site for NAD(+); sequence LARLNI. FMN-binding positions include 165–166 and 206–208; these read EG and KSR.

Belongs to the nitroreductase family. In terms of assembly, homodimer. The cofactor is FMN.

Its function is as follows. Involved in bioluminescence. It is a good supplier of reduced flavin mononucleotide (FMNH2) to the bioluminescence reaction. Major FMN reductase. It is capable of using both NADH and NADPH as electron donors. As electron acceptor, FMN is the most effective, FAD is considerably effective, and riboflavin is the least effective. In Aliivibrio fischeri (Vibrio fischeri), this protein is Major NAD(P)H-flavin oxidoreductase.